The chain runs to 59 residues: UPF0339 protein CC_2965 (59 aa).

The protein belongs to the UPF0339 family.

In Caulobacter vibrioides (strain ATCC 19089 / CIP 103742 / CB 15) (Caulobacter crescentus), this protein is UPF0339 protein CC_2965.